A 307-amino-acid chain; its full sequence is tRNA pseudouridine synthase B (307 aa).

Residue Asp38 is the Nucleophile of the active site.

It belongs to the pseudouridine synthase TruB family. Type 1 subfamily.

It carries out the reaction uridine(55) in tRNA = pseudouridine(55) in tRNA. Responsible for synthesis of pseudouridine from uracil-55 in the psi GC loop of transfer RNAs. The sequence is that of tRNA pseudouridine synthase B from Lachnoclostridium phytofermentans (strain ATCC 700394 / DSM 18823 / ISDg) (Clostridium phytofermentans).